A 49-amino-acid chain; its full sequence is Defensin Tk-AMP-D2 (49 aa).

Cystine bridges form between Cys3–Cys49, Cys14–Cys34, Cys20–Cys43, and Cys24–Cys45.

In terms of biological role, plant defense peptide. This is Defensin Tk-AMP-D2 from Triticum kiharae (Wheat).